The following is a 53-amino-acid chain: Metallocarboxypeptidase inhibitor (53 aa).

3 disulfide bridges follow: cysteine 9/cysteine 23, cysteine 15/cysteine 51, and cysteine 27/cysteine 38. Alanine 53 serves as a coordination point for Zn(2+).

In terms of assembly, monomer. Interacts (via C-terminus) with human CPA4.

In terms of biological role, metallocarboxypeptidase inhibitor. Has an inhibitory effect on bovine CPA1 and CPB2, human CPA1, CPA2, CPA4, CPB1 and CPB2, and porcine CPB1. Does not inhibit D.melanogaster svr (carboxypeptidase D). Shows no activity against serine proteases subtilisin or bovine trypsin, cysteine protease papain, and aspartyl protease porcine pepsin. The protein is Metallocarboxypeptidase inhibitor of Nerita versicolor (Four-tooth nerite).